The sequence spans 33 residues: Dermaseptin-H6 (33 aa).

A Leucine amide modification is found at Leu33.

Expressed by the skin glands.

It is found in the secreted. In terms of biological role, has antimicrobial activity. The sequence is that of Dermaseptin-H6 from Pithecopus hypochondrialis (Orange-legged leaf frog).